The primary structure comprises 122 residues: Large ribosomal subunit protein uL14 (122 aa).

This sequence belongs to the universal ribosomal protein uL14 family. Part of the 50S ribosomal subunit. Forms a cluster with proteins L3 and L19. In the 70S ribosome, L14 and L19 interact and together make contacts with the 16S rRNA in bridges B5 and B8.

Functionally, binds to 23S rRNA. Forms part of two intersubunit bridges in the 70S ribosome. This chain is Large ribosomal subunit protein uL14, found in Chlamydia trachomatis serovar L2 (strain ATCC VR-902B / DSM 19102 / 434/Bu).